A 244-amino-acid chain; its full sequence is 1-(5-phosphoribosyl)-5-[(5-phosphoribosylamino)methylideneamino] imidazole-4-carboxamide isomerase (244 aa).

Catalysis depends on Asp-8, which acts as the Proton acceptor. Asp-129 serves as the catalytic Proton donor.

It belongs to the HisA/HisF family.

It is found in the cytoplasm. The catalysed reaction is 1-(5-phospho-beta-D-ribosyl)-5-[(5-phospho-beta-D-ribosylamino)methylideneamino]imidazole-4-carboxamide = 5-[(5-phospho-1-deoxy-D-ribulos-1-ylimino)methylamino]-1-(5-phospho-beta-D-ribosyl)imidazole-4-carboxamide. It functions in the pathway amino-acid biosynthesis; L-histidine biosynthesis; L-histidine from 5-phospho-alpha-D-ribose 1-diphosphate: step 4/9. The protein is 1-(5-phosphoribosyl)-5-[(5-phosphoribosylamino)methylideneamino] imidazole-4-carboxamide isomerase of Allorhizobium ampelinum (strain ATCC BAA-846 / DSM 112012 / S4) (Agrobacterium vitis (strain S4)).